The primary structure comprises 235 residues: N-alpha-acetyltransferase 10 (235 aa).

The residue at position 1 (M1) is an N-acetylmethionine. Positions 1–58 (MNIRNARPEDLMNMQHCNLLCLPENYQMKYYFYHGLSWPQLSYIAEDENGKIVGYVLA) are interaction with NAA15. The 152-residue stretch at 1-152 (MNIRNARPED…DAYAMKRDLT (152 aa)) folds into the N-acetyltransferase domain. At K136 the chain carries N6-acetyllysine; by autocatalysis. The interval 178-235 (NKVESKGNSPPSSGEACREEKGLAAEDSGGDSKDLSEVSETTESTDVKDSSEASDSAS) is disordered. Phosphoserine occurs at positions 182, 186, and 205. Positions 193 to 213 (ACREEKGLAAEDSGGDSKDLS) are enriched in basic and acidic residues. Position 209 is a phosphoserine; by IKKB (S209). Phosphoserine occurs at positions 213 and 216.

This sequence belongs to the acetyltransferase family. ARD1 subfamily. In terms of assembly, component of the N-terminal acetyltransferase A complex (also called the NatA complex) composed of NAA10 and NAA15. Within the complex interacts with NAA15. Component of the N-terminal acetyltransferase A (NatA)/HYPK complex at least composed of NAA10, NAA15 and HYPK, which has N-terminal acetyltransferase activity. In complex with NAA15, interacts with HYPK. Component of the N-terminal acetyltransferase E (NatE) complex at least composed of NAA10, NAA15 and NAA50. Within the complex interacts with NAA15; the interaction is required for binding to NAAT50. Interacts with NAAT50. The interaction of the NatA complex with NAA50 reduces the acetylation activity of the NatA complex. Component of the N-terminal acetyltransferase E (NatE)/HYPK complex at least composed of NAA10, NAA15, NAA50 and HYPK. In complex with NAA15, interacts with HYPK; the interaction with HYPK reduces the capacity of the NatA complex to interact with NAA50. Interacts with HIF1A (via its ODD domain); the interaction increases HIF1A protein stability during normoxia, an down-regulates it when induced by hypoxia. Interacts with the ribosome. Binds to MYLK. Interacts with NAA16. Interacts (via its C-terminal domain) with TSC2, leading to its acetylation. Interacts with IKBKB. Interacts with HSPA1A and HSPA1B leading to its acetylation. Cleaved by caspases during apoptosis. In terms of processing, phosphorylation by IKBKB/IKKB at Ser-209 promotes its proteasome-mediated degradation. Post-translationally, autoacetylated at Lys-136 which stimulates its catalytic activity. In terms of tissue distribution, ubiquitous.

It localises to the cytoplasm. It is found in the nucleus. The catalysed reaction is N-terminal glycyl-[protein] + acetyl-CoA = N-terminal N(alpha)-acetylglycyl-[protein] + CoA + H(+). It carries out the reaction N-terminal L-alanyl-[protein] + acetyl-CoA = N-terminal N(alpha)-acetyl-L-alanyl-[protein] + CoA + H(+). The enzyme catalyses N-terminal L-seryl-[protein] + acetyl-CoA = N-terminal N(alpha)-acetyl-L-seryl-[protein] + CoA + H(+). It catalyses the reaction N-terminal L-valyl-[protein] + acetyl-CoA = N-terminal N(alpha)-acetyl-L-valyl-[protein] + CoA + H(+). The catalysed reaction is N-terminal L-cysteinyl-[protein] + acetyl-CoA = N-terminal N(alpha)-acetyl-L-cysteinyl-[protein] + CoA + H(+). It carries out the reaction N-terminal L-threonyl-[protein] + acetyl-CoA = N-terminal N(alpha)-acetyl-L-threonyl-[protein] + CoA + H(+). Catalytic subunit of N-terminal acetyltransferase complexes which display alpha (N-terminal) acetyltransferase activity. Acetylates amino termini that are devoid of initiator methionine. The alpha (N-terminal) acetyltransferase activity may be important for vascular, hematopoietic and neuronal growth and development. Without NAA15, displays epsilon (internal) acetyltransferase activity towards HIF1A, thereby promoting its degradation. Represses MYLK kinase activity by acetylation, and thus represses tumor cell migration. Acetylates, and stabilizes TSC2, thereby repressing mTOR activity and suppressing cancer development. Acetylates HSPA1A and HSPA1B at 'Lys-77' which enhances its chaperone activity and leads to preferential binding to co-chaperone HOPX. Acetylates HIST1H4A. Acts as a negative regulator of sister chromatid cohesion during mitosis. This Homo sapiens (Human) protein is N-alpha-acetyltransferase 10 (NAA10).